The chain runs to 655 residues: p-hydroxybenzoic acid efflux pump subunit AaeB (655 aa).

Residues 1 to 12 (MGIFSIANQHIR) lie on the Periplasmic side of the membrane. The helical transmembrane segment at 13–33 (FAVKLATAIVLALFVGFHFQL) threads the bilayer. Residues 34-37 (ETPR) lie on the Cytoplasmic side of the membrane. A helical transmembrane segment spans residues 38 to 58 (WAVLTAAIVAAGTAFAAGGEP). Residues 59 to 68 (YSGAIRYRGF) are Periplasmic-facing. A helical transmembrane segment spans residues 69–89 (LRIIGTFIGCIAGLVIIIAMI). Residues 90–92 (RAP) are Cytoplasmic-facing. A helical transmembrane segment spans residues 93-113 (LLMILVCCIWAGFCTWISSLV). The Periplasmic portion of the chain corresponds to 114-120 (RIENSYA). Residues 121-141 (WGLAGYTALIIVITIQPEPLL) traverse the membrane as a helical segment. Over 142-151 (TPQFAVERCS) the chain is Cytoplasmic. Residues 152–172 (EIVIGIVCAIMADLLFSPRSI) traverse the membrane as a helical segment. The Periplasmic portion of the chain corresponds to 173–369 (KQEVDRELES…RTTLSCILGT (197 aa)). The helical transmembrane segment at 370 to 390 (LFWLWTGWTSGSGAMVMIAVV) threads the bilayer. The Cytoplasmic segment spans residues 391-406 (TSLAMRLPNPRMVAID). A helical membrane pass occupies residues 407–427 (FIYGTLAALPLGLLYFLVIIP). At 428 to 430 (NTQ) the chain is on the periplasmic side. A helical transmembrane segment spans residues 431–451 (QSMLLLCISLAVLGFFLGIEV). Over 452 to 458 (QKRRLGS) the chain is Cytoplasmic. Residues 459 to 479 (MGALASTINIIVLDNPMTFHF) traverse the membrane as a helical segment. Residues 480 to 481 (SQ) lie on the Periplasmic side of the membrane. Residues 482-502 (FLDSALGQIVGCVLAFTVILL) traverse the membrane as a helical segment. Topologically, residues 503–655 (VRDKSRDRTG…HKYQHALTDS (153 aa)) are cytoplasmic.

Belongs to the aromatic acid exporter ArAE (TC 2.A.85) family.

It is found in the cell inner membrane. In terms of biological role, forms an efflux pump with AaeA. Could function as a metabolic relief valve, allowing to eliminate certain compounds when they accumulate to high levels in the cell. Substrates are p-hydroxybenzoic acid (pHBA), 6-hydroxy-2-naphthoic and 2-hydroxycinnamate. This chain is p-hydroxybenzoic acid efflux pump subunit AaeB, found in Escherichia coli (strain K12).